The primary structure comprises 796 residues: Kinesin-like protein KIF3C (796 aa).

The Kinesin motor domain maps to Ala10–Ile367. Gly97–Thr104 contributes to the ATP binding site. Disordered regions lie at residues Arg252 to Ala292, Glu397 to Gly422, and Lys758 to Asp796. Positions Ala256–Thr269 are enriched in low complexity. Residues Lys378 to Lys632 adopt a coiled-coil conformation. Over residues Met401–Ala416 the composition is skewed to basic residues. The tract at residues Tyr633–Val793 is globular.

Belongs to the TRAFAC class myosin-kinesin ATPase superfamily. Kinesin family. Kinesin II subfamily. As to quaternary structure, heterodimer of KIF3A and KIF3C.

It localises to the cytoplasm. It is found in the cytoskeleton. Its function is as follows. Microtubule-based anterograde translocator for membranous organelles. This Mus musculus (Mouse) protein is Kinesin-like protein KIF3C (Kif3c).